The chain runs to 256 residues: uncharacterized protein (256 aa).

Over residues 201–214 the composition is skewed to basic and acidic residues; sequence ACKEGVDSSCKEEG. The disordered stretch occupies residues 201 to 231; sequence ACKEGVDSSCKEEGGGCEEEGSGSEEDSDDS. Over residues 215-231 the composition is skewed to acidic residues; sequence GGCEEEGSGSEEDSDDS.

The protein resides in the mitochondrion. This is an uncharacterized protein from Zea mays (Maize).